Consider the following 550-residue polypeptide: Chaperonin GroEL (550 aa).

Residues 30 to 33 (TLGP), Lys-51, 87 to 91 (DGTTT), Gly-416, 480 to 482 (NVA), and Asp-496 contribute to the ATP site. Residues 525–550 (LPKKDDEGGGGDMGGMGGMGGMGGMM) are disordered. Residues 534–550 (GGDMGGMGGMGGMGGMM) show a composition bias toward gly residues.

This sequence belongs to the chaperonin (HSP60) family. As to quaternary structure, forms a cylinder of 14 subunits composed of two heptameric rings stacked back-to-back. Interacts with the co-chaperonin GroES.

The protein localises to the cytoplasm. The catalysed reaction is ATP + H2O + a folded polypeptide = ADP + phosphate + an unfolded polypeptide.. In terms of biological role, together with its co-chaperonin GroES, plays an essential role in assisting protein folding. The GroEL-GroES system forms a nano-cage that allows encapsulation of the non-native substrate proteins and provides a physical environment optimized to promote and accelerate protein folding. This chain is Chaperonin GroEL, found in Halorhodospira halophila (strain DSM 244 / SL1) (Ectothiorhodospira halophila (strain DSM 244 / SL1)).